Here is a 364-residue protein sequence, read N- to C-terminus: GDP-fucose transporter 1 (364 aa).

8 helical membrane-spanning segments follow: residues 34-56 (FVLR…ISMV), 76-98 (VTFY…ATCC), 111-130 (LKVA…MITF), 140-162 (VAFY…YLLL), 167-185 (SFYA…WLGV), 195-214 (SWTG…LNAI), 227-249 (IWRL…LLAL), and 264-286 (AHFW…VTGL). Residues 345-364 (MKKTQEEPHPRENEKSNMEV) form a disordered region.

It belongs to the TPT transporter family. SLC35C subfamily.

The protein resides in the golgi apparatus membrane. It carries out the reaction GMP(out) + GDP-beta-L-fucose(in) = GMP(in) + GDP-beta-L-fucose(out). Functionally, antiporter specific for GDP-l-fucose and depending on the concomitant reverse transport of GMP. Involved in GDP-fucose import from the cytoplasm into the Golgi lumen. The sequence is that of GDP-fucose transporter 1 (SLC35C1) from Bos taurus (Bovine).